Reading from the N-terminus, the 152-residue chain is Deoxyuridine 5'-triphosphate nucleotidohydrolase (152 aa).

Substrate contacts are provided by residues 71-73 (RSG), Asn84, 88-90 (LID), and Met98.

Belongs to the dUTPase family. The cofactor is Mg(2+).

The catalysed reaction is dUTP + H2O = dUMP + diphosphate + H(+). Its pathway is pyrimidine metabolism; dUMP biosynthesis; dUMP from dCTP (dUTP route): step 2/2. This enzyme is involved in nucleotide metabolism: it produces dUMP, the immediate precursor of thymidine nucleotides and it decreases the intracellular concentration of dUTP so that uracil cannot be incorporated into DNA. This chain is Deoxyuridine 5'-triphosphate nucleotidohydrolase, found in Salmonella agona (strain SL483).